The chain runs to 454 residues: Bifunctional protein GlmU (454 aa).

A pyrophosphorylase region spans residues 1-226; sequence MTTTVIILAA…AFEVEGVNDR (226 aa). Residues 8 to 11, Lys22, Gln73, 78 to 79, 100 to 102, Gly137, Glu151, Asn166, and Asn224 each bind UDP-N-acetyl-alpha-D-glucosamine; these read LAAG, GT, and YGD. Residue Asp102 participates in Mg(2+) binding. Asn224 lines the Mg(2+) pocket. Residues 227 to 247 are linker; the sequence is LQLAALEREFQLQQAKSLMQQ. An N-acetyltransferase region spans residues 248–454; that stretch reads GVTLTDPSRF…NYQRPQKLKK (207 aa). Arg330 and Lys348 together coordinate UDP-N-acetyl-alpha-D-glucosamine. His360 serves as the catalytic Proton acceptor. The UDP-N-acetyl-alpha-D-glucosamine site is built by Tyr363 and Asn374. Acetyl-CoA is bound by residues Ala377, 383 to 384, Ser402, Ala420, and Arg437; that span reads NY.

It in the N-terminal section; belongs to the N-acetylglucosamine-1-phosphate uridyltransferase family. This sequence in the C-terminal section; belongs to the transferase hexapeptide repeat family. As to quaternary structure, homotrimer. Mg(2+) is required as a cofactor.

Its subcellular location is the cytoplasm. It catalyses the reaction alpha-D-glucosamine 1-phosphate + acetyl-CoA = N-acetyl-alpha-D-glucosamine 1-phosphate + CoA + H(+). The enzyme catalyses N-acetyl-alpha-D-glucosamine 1-phosphate + UTP + H(+) = UDP-N-acetyl-alpha-D-glucosamine + diphosphate. Its pathway is nucleotide-sugar biosynthesis; UDP-N-acetyl-alpha-D-glucosamine biosynthesis; N-acetyl-alpha-D-glucosamine 1-phosphate from alpha-D-glucosamine 6-phosphate (route II): step 2/2. It participates in nucleotide-sugar biosynthesis; UDP-N-acetyl-alpha-D-glucosamine biosynthesis; UDP-N-acetyl-alpha-D-glucosamine from N-acetyl-alpha-D-glucosamine 1-phosphate: step 1/1. It functions in the pathway bacterial outer membrane biogenesis; LPS lipid A biosynthesis. Its function is as follows. Catalyzes the last two sequential reactions in the de novo biosynthetic pathway for UDP-N-acetylglucosamine (UDP-GlcNAc). The C-terminal domain catalyzes the transfer of acetyl group from acetyl coenzyme A to glucosamine-1-phosphate (GlcN-1-P) to produce N-acetylglucosamine-1-phosphate (GlcNAc-1-P), which is converted into UDP-GlcNAc by the transfer of uridine 5-monophosphate (from uridine 5-triphosphate), a reaction catalyzed by the N-terminal domain. The polypeptide is Bifunctional protein GlmU (Acinetobacter baylyi (strain ATCC 33305 / BD413 / ADP1)).